Here is a 443-residue protein sequence, read N- to C-terminus: Probable D-serine dehydratase (443 aa).

Position 106 is an N6-(pyridoxal phosphate)lysine (Lys106).

Belongs to the serine/threonine dehydratase family. DsdA subfamily. The cofactor is pyridoxal 5'-phosphate.

The catalysed reaction is D-serine = pyruvate + NH4(+). In Cupriavidus pinatubonensis (strain JMP 134 / LMG 1197) (Cupriavidus necator (strain JMP 134)), this protein is Probable D-serine dehydratase.